A 172-amino-acid polypeptide reads, in one-letter code: Scytalone dehydratase-like protein Arp1 (172 aa).

Substrate is bound at residue Y49. Catalysis depends on residues H84 and H109. N130 contributes to the substrate binding site.

It belongs to the scytalone dehydratase family. As to quaternary structure, homotrimer. Each subunit contains an active site, located in the central part of the hydrophobic core of the monomer, which functions independently.

Scytalone dehydratase-like protein; part of the Pks2 gene cluster that mediates the formation of infectious structures (appressoria), enabling these fungi to kill insects faster. The product of the Pks2 gene cluster is different from the one of Pks1 and has still not been identified. In Metarhizium robertsii (strain ARSEF 23 / ATCC MYA-3075) (Metarhizium anisopliae (strain ARSEF 23)), this protein is Scytalone dehydratase-like protein Arp1.